A 383-amino-acid polypeptide reads, in one-letter code: UDP-N-acetylglucosamine--N-acetylmuramyl-(pentapeptide) pyrophosphoryl-undecaprenol N-acetylglucosamine transferase (383 aa).

UDP-N-acetyl-alpha-D-glucosamine is bound by residues 10–12 (TGG), asparagine 124, arginine 165, serine 190, isoleucine 245, and glutamine 290. The segment at 363 to 383 (SPFGQAREPGQKPARPPDPAS) is disordered.

It belongs to the glycosyltransferase 28 family. MurG subfamily.

The protein resides in the cell inner membrane. It catalyses the reaction di-trans,octa-cis-undecaprenyl diphospho-N-acetyl-alpha-D-muramoyl-L-alanyl-D-glutamyl-meso-2,6-diaminopimeloyl-D-alanyl-D-alanine + UDP-N-acetyl-alpha-D-glucosamine = di-trans,octa-cis-undecaprenyl diphospho-[N-acetyl-alpha-D-glucosaminyl-(1-&gt;4)]-N-acetyl-alpha-D-muramoyl-L-alanyl-D-glutamyl-meso-2,6-diaminopimeloyl-D-alanyl-D-alanine + UDP + H(+). It functions in the pathway cell wall biogenesis; peptidoglycan biosynthesis. Cell wall formation. Catalyzes the transfer of a GlcNAc subunit on undecaprenyl-pyrophosphoryl-MurNAc-pentapeptide (lipid intermediate I) to form undecaprenyl-pyrophosphoryl-MurNAc-(pentapeptide)GlcNAc (lipid intermediate II). In Anaeromyxobacter dehalogenans (strain 2CP-1 / ATCC BAA-258), this protein is UDP-N-acetylglucosamine--N-acetylmuramyl-(pentapeptide) pyrophosphoryl-undecaprenol N-acetylglucosamine transferase.